Here is a 274-residue protein sequence, read N- to C-terminus: uncharacterized protein (274 aa).

The protein belongs to the PhoU family.

This is an uncharacterized protein from Deinococcus radiodurans (strain ATCC 13939 / DSM 20539 / JCM 16871 / CCUG 27074 / LMG 4051 / NBRC 15346 / NCIMB 9279 / VKM B-1422 / R1).